The chain runs to 150 residues: Pyruvoyl-dependent arginine decarboxylase (150 aa).

Serine 42 carries the pyruvic acid (Ser) modification.

The protein belongs to the PdaD family. The cofactor is pyruvate.

It catalyses the reaction L-arginine + H(+) = agmatine + CO2. The polypeptide is Pyruvoyl-dependent arginine decarboxylase (Methanopyrus kandleri (strain AV19 / DSM 6324 / JCM 9639 / NBRC 100938)).